A 415-amino-acid polypeptide reads, in one-letter code: GPI mannosyltransferase 1 (415 aa).

9 consecutive transmembrane segments (helical) span residues 8–28, 82–102, 134–154, 158–178, 222–242, 284–304, 329–349, 354–374, and 387–407; these read PSLV…YGAW, FFSF…WLIA, TRGS…WAVL, ITLA…PFVY, LLLT…MYIL, FESL…PIVL, SQYF…SSLM, LGIT…QQGY, and GLFL…GIII.

The protein belongs to the PIGM family.

It is found in the endoplasmic reticulum membrane. It participates in glycolipid biosynthesis; glycosylphosphatidylinositol-anchor biosynthesis. Mannosyltransferase involved in glycosylphosphatidylinositol-anchor biosynthesis. Transfers the first alpha-1,4-mannose to GlcN-acyl-PI during GPI precursor assembly. Required for cell wall integrity. This Aspergillus oryzae (strain ATCC 42149 / RIB 40) (Yellow koji mold) protein is GPI mannosyltransferase 1 (gpi14).